The sequence spans 216 residues: MPTLLHLDASPRRRSISRDIGAAFADSWRATAPNGHYIHRDLAADPVPFIDAAWTEICDAVLAAGGTDLAALPTLVRTPAQAAAWRIVEPLLDELLAADVVLIGTPMYNYSIPAALKAWLDQVTFPRMSLAPRRFVVAAARGGSYSPGTPKAAFDHQERYLRDFFAGHFAVTDTVFVTAELANARQDPALAARRAEHDASYADALDTARRLGKEYR.

Residues S10 and 15-17 each bind FMN; that span reads SIS.

It belongs to the azoreductase type 1 family. As to quaternary structure, homodimer. FMN is required as a cofactor.

It carries out the reaction 2 a quinone + NADH + H(+) = 2 a 1,4-benzosemiquinone + NAD(+). The catalysed reaction is N,N-dimethyl-1,4-phenylenediamine + anthranilate + 2 NAD(+) = 2-(4-dimethylaminophenyl)diazenylbenzoate + 2 NADH + 2 H(+). In terms of biological role, quinone reductase that provides resistance to thiol-specific stress caused by electrophilic quinones. Functionally, also exhibits azoreductase activity. Catalyzes the reductive cleavage of the azo bond in aromatic azo compounds to the corresponding amines. The polypeptide is FMN-dependent NADH:quinone oxidoreductase (Nocardia farcinica (strain IFM 10152)).